The primary structure comprises 122 residues: ATP synthase epsilon chain (122 aa).

This sequence belongs to the ATPase epsilon chain family. In terms of assembly, F-type ATPases have 2 components, CF(1) - the catalytic core - and CF(0) - the membrane proton channel. CF(1) has five subunits: alpha(3), beta(3), gamma(1), delta(1), epsilon(1). CF(0) has three main subunits: a, b and c.

Its subcellular location is the cell membrane. Its function is as follows. Produces ATP from ADP in the presence of a proton gradient across the membrane. The sequence is that of ATP synthase epsilon chain from Rhodococcus opacus (strain B4).